Consider the following 325-residue polypeptide: Tetraacyldisaccharide 4'-kinase (325 aa).

Position 58 to 65 (58 to 65 (TVGGSGKT)) interacts with ATP.

Belongs to the LpxK family.

It carries out the reaction a lipid A disaccharide + ATP = a lipid IVA + ADP + H(+). It functions in the pathway glycolipid biosynthesis; lipid IV(A) biosynthesis; lipid IV(A) from (3R)-3-hydroxytetradecanoyl-[acyl-carrier-protein] and UDP-N-acetyl-alpha-D-glucosamine: step 6/6. Transfers the gamma-phosphate of ATP to the 4'-position of a tetraacyldisaccharide 1-phosphate intermediate (termed DS-1-P) to form tetraacyldisaccharide 1,4'-bis-phosphate (lipid IVA). This is Tetraacyldisaccharide 4'-kinase from Coxiella burnetii (strain CbuG_Q212) (Coxiella burnetii (strain Q212)).